The sequence spans 76 residues: ATP synthase subunit c (76 aa).

The next 2 membrane-spanning stretches (helical) occupy residues 13–33 (LSVI…GILF) and 55–75 (FIGL…ALII).

The protein belongs to the ATPase C chain family. F-type ATPases have 2 components, F(1) - the catalytic core - and F(0) - the membrane proton channel. F(1) has five subunits: alpha(3), beta(3), gamma(1), delta(1), epsilon(1). F(0) has three main subunits: a(1), b(2) and c(10-14). The alpha and beta chains form an alternating ring which encloses part of the gamma chain. F(1) is attached to F(0) by a central stalk formed by the gamma and epsilon chains, while a peripheral stalk is formed by the delta and b chains.

It is found in the cell membrane. Functionally, f(1)F(0) ATP synthase produces ATP from ADP in the presence of a proton or sodium gradient. F-type ATPases consist of two structural domains, F(1) containing the extramembraneous catalytic core and F(0) containing the membrane proton channel, linked together by a central stalk and a peripheral stalk. During catalysis, ATP synthesis in the catalytic domain of F(1) is coupled via a rotary mechanism of the central stalk subunits to proton translocation. Key component of the F(0) channel; it plays a direct role in translocation across the membrane. A homomeric c-ring of between 10-14 subunits forms the central stalk rotor element with the F(1) delta and epsilon subunits. This chain is ATP synthase subunit c, found in Bifidobacterium longum subsp. infantis (strain ATCC 15697 / DSM 20088 / JCM 1222 / NCTC 11817 / S12).